We begin with the raw amino-acid sequence, 169 residues long: Putative tRNA (cytidine(34)-2'-O)-methyltransferase (169 aa).

Positions 79, 104, 125, and 133 each coordinate S-adenosyl-L-methionine.

This sequence belongs to the class IV-like SAM-binding methyltransferase superfamily. RNA methyltransferase TrmH family. TrmL subfamily.

It is found in the cytoplasm. The catalysed reaction is cytidine(34) in tRNA + S-adenosyl-L-methionine = 2'-O-methylcytidine(34) in tRNA + S-adenosyl-L-homocysteine + H(+). It carries out the reaction 5-carboxymethylaminomethyluridine(34) in tRNA(Leu) + S-adenosyl-L-methionine = 5-carboxymethylaminomethyl-2'-O-methyluridine(34) in tRNA(Leu) + S-adenosyl-L-homocysteine + H(+). In terms of biological role, could methylate the ribose at the nucleotide 34 wobble position in tRNA. The chain is Putative tRNA (cytidine(34)-2'-O)-methyltransferase from Listeria monocytogenes serotype 4b (strain F2365).